The following is a 477-amino-acid chain: Succinate-semialdehyde dehydrogenase [NADP(+)] (477 aa).

Residues 142-143 (WN), 166-169 (KHSE), and 218-219 (GS) each bind NADP(+). Glutamate 240 functions as the Proton acceptor in the catalytic mechanism. Leucine 241 contacts NADP(+). Cysteine 274 serves as the catalytic Nucleophile. An NADP(+)-binding site is contributed by glutamate 371.

It belongs to the aldehyde dehydrogenase family.

It carries out the reaction succinate semialdehyde + NADP(+) + H2O = succinate + NADPH + 2 H(+). The protein operates within amino-acid degradation; 4-aminobutanoate degradation. Its function is as follows. Catalyzes the NADP(+) dependent oxidation of succinate semialdehyde to succinate. In Deinococcus radiodurans (strain ATCC 13939 / DSM 20539 / JCM 16871 / CCUG 27074 / LMG 4051 / NBRC 15346 / NCIMB 9279 / VKM B-1422 / R1), this protein is Succinate-semialdehyde dehydrogenase [NADP(+)] (ssdA).